The following is a 202-amino-acid chain: LexA repressor (202 aa).

A DNA-binding region (H-T-H motif) is located at residues Arg28 to Lys48. Catalysis depends on for autocatalytic cleavage activity residues Ser119 and Lys156.

This sequence belongs to the peptidase S24 family. Homodimer.

The enzyme catalyses Hydrolysis of Ala-|-Gly bond in repressor LexA.. Its function is as follows. Represses a number of genes involved in the response to DNA damage (SOS response), including recA and lexA. Binds to the 16 bp palindromic sequence 5'-CTGTATATATATACAG-3'. In the presence of single-stranded DNA, RecA interacts with LexA causing an autocatalytic cleavage which disrupts the DNA-binding part of LexA, leading to derepression of the SOS regulon and eventually DNA repair. The chain is LexA repressor from Yersinia enterocolitica serotype O:8 / biotype 1B (strain NCTC 13174 / 8081).